We begin with the raw amino-acid sequence, 276 residues long: Monoglyceride lipase homolog (276 aa).

This sequence belongs to the orthopoxvirus OPG043 family.

The polypeptide is Monoglyceride lipase homolog (OPG043) (Cynomys gunnisoni (Gunnison's prairie dog)).